Consider the following 125-residue polypeptide: Small ribosomal subunit protein uS12m (125 aa).

Belongs to the universal ribosomal protein uS12 family. As to quaternary structure, component of the mitochondrial ribosome small subunit.

The protein localises to the mitochondrion. Protein S12 is involved in the translation initiation step. This chain is Small ribosomal subunit protein uS12m (RPS12), found in Arabidopsis thaliana (Mouse-ear cress).